The primary structure comprises 196 residues: PRADC1-like protein (196 aa).

The N-terminal stretch at 1 to 18 (MLIAWLVLAATLSRSIRA) is a signal peptide. In terms of domain architecture, PA spans 73 to 171 (ITDPPGACQE…STLQRLKRVH (99 aa)). Asparagine 179 carries an N-linked (GlcNAc...) asparagine glycan.

It localises to the secreted. In terms of biological role, may be involved in iversification of muscle cell fates. This chain is PRADC1-like protein, found in Drosophila melanogaster (Fruit fly).